A 41-amino-acid chain; its full sequence is Large ribosomal subunit protein bL32c (41 aa).

It belongs to the bacterial ribosomal protein bL32 family.

The protein localises to the plastid. This is Large ribosomal subunit protein bL32c (rpl32) from Helicosporidium sp. subsp. Simulium jonesii (Green alga).